Consider the following 304-residue polypeptide: Pyridoxal 5'-phosphate synthase subunit PdxS (304 aa).

Asp34 contacts D-ribose 5-phosphate. The active-site Schiff-base intermediate with D-ribose 5-phosphate is the Lys91. Gly163 serves as a coordination point for D-ribose 5-phosphate. Residue Arg175 participates in D-glyceraldehyde 3-phosphate binding. D-ribose 5-phosphate contacts are provided by residues Gly224 and 245-246; that span reads GS.

Belongs to the PdxS/SNZ family. In terms of assembly, in the presence of PdxT, forms a dodecamer of heterodimers.

It carries out the reaction aldehydo-D-ribose 5-phosphate + D-glyceraldehyde 3-phosphate + L-glutamine = pyridoxal 5'-phosphate + L-glutamate + phosphate + 3 H2O + H(+). The protein operates within cofactor biosynthesis; pyridoxal 5'-phosphate biosynthesis. Functionally, catalyzes the formation of pyridoxal 5'-phosphate from ribose 5-phosphate (RBP), glyceraldehyde 3-phosphate (G3P) and ammonia. The ammonia is provided by the PdxT subunit. Can also use ribulose 5-phosphate and dihydroxyacetone phosphate as substrates, resulting from enzyme-catalyzed isomerization of RBP and G3P, respectively. The chain is Pyridoxal 5'-phosphate synthase subunit PdxS from Streptomyces avermitilis (strain ATCC 31267 / DSM 46492 / JCM 5070 / NBRC 14893 / NCIMB 12804 / NRRL 8165 / MA-4680).